We begin with the raw amino-acid sequence, 380 residues long: Chaperone protein DnaJ (380 aa).

Positions 5–70 (DYYEALGVAR…RKRTAYDQFG (66 aa)) constitute a J domain. The segment at 137–215 (GTTAKIRIPT…CRGEGRVREH (79 aa)) adopts a CR-type zinc-finger fold. Zn(2+) is bound by residues C150, C153, C167, C170, C189, C192, C203, and C206. 4 CXXCXGXG motif repeats span residues 150–157 (CKACEGSG), 167–174 (CPTCGGHG), 189–196 (CPRCHGSG), and 203–210 (CSTCRGEG). The segment at 222-247 (IPPGVDTGDRIRLTGEGEAGESGGPP) is disordered.

It belongs to the DnaJ family. In terms of assembly, homodimer. It depends on Zn(2+) as a cofactor.

It localises to the cytoplasm. In terms of biological role, participates actively in the response to hyperosmotic and heat shock by preventing the aggregation of stress-denatured proteins and by disaggregating proteins, also in an autonomous, DnaK-independent fashion. Unfolded proteins bind initially to DnaJ; upon interaction with the DnaJ-bound protein, DnaK hydrolyzes its bound ATP, resulting in the formation of a stable complex. GrpE releases ADP from DnaK; ATP binding to DnaK triggers the release of the substrate protein, thus completing the reaction cycle. Several rounds of ATP-dependent interactions between DnaJ, DnaK and GrpE are required for fully efficient folding. Also involved, together with DnaK and GrpE, in the DNA replication of plasmids through activation of initiation proteins. This chain is Chaperone protein DnaJ, found in Nitrosococcus oceani (strain ATCC 19707 / BCRC 17464 / JCM 30415 / NCIMB 11848 / C-107).